Consider the following 241-residue polypeptide: 3-dehydroquinate dehydratase (241 aa).

3-dehydroquinate contacts are provided by residues 35 to 37 (ELR) and R70. H132 functions as the Proton donor/acceptor in the catalytic mechanism. K159 serves as the catalytic Schiff-base intermediate with substrate. The 3-dehydroquinate site is built by R201 and Q224.

This sequence belongs to the type-I 3-dehydroquinase family. As to quaternary structure, homodimer.

It carries out the reaction 3-dehydroquinate = 3-dehydroshikimate + H2O. It functions in the pathway metabolic intermediate biosynthesis; chorismate biosynthesis; chorismate from D-erythrose 4-phosphate and phosphoenolpyruvate: step 3/7. Involved in the third step of the chorismate pathway, which leads to the biosynthesis of aromatic amino acids. Catalyzes the cis-dehydration of 3-dehydroquinate (DHQ) and introduces the first double bond of the aromatic ring to yield 3-dehydroshikimate. The polypeptide is 3-dehydroquinate dehydratase (Staphylococcus carnosus (strain TM300)).